A 151-amino-acid polypeptide reads, in one-letter code: D-aminoacyl-tRNA deacylase (151 aa).

Residues 138 to 139 (GP) carry the Gly-cisPro motif, important for rejection of L-amino acids motif.

Belongs to the DTD family. Homodimer.

It is found in the cytoplasm. It catalyses the reaction glycyl-tRNA(Ala) + H2O = tRNA(Ala) + glycine + H(+). It carries out the reaction a D-aminoacyl-tRNA + H2O = a tRNA + a D-alpha-amino acid + H(+). An aminoacyl-tRNA editing enzyme that deacylates mischarged D-aminoacyl-tRNAs. Also deacylates mischarged glycyl-tRNA(Ala), protecting cells against glycine mischarging by AlaRS. Acts via tRNA-based rather than protein-based catalysis; rejects L-amino acids rather than detecting D-amino acids in the active site. By recycling D-aminoacyl-tRNA to D-amino acids and free tRNA molecules, this enzyme counteracts the toxicity associated with the formation of D-aminoacyl-tRNA entities in vivo and helps enforce protein L-homochirality. In Magnetococcus marinus (strain ATCC BAA-1437 / JCM 17883 / MC-1), this protein is D-aminoacyl-tRNA deacylase.